A 305-amino-acid polypeptide reads, in one-letter code: Nitrogen assimilation regulatory protein nac (305 aa).

The HTH lysR-type domain maps to 1–58 (MNFRRLKYFVKIVDIGSLTQAAEVLHIAQPALSQQVATLEGELNQQLLIRTKRGVTPT). Residues 18 to 37 (LTQAAEVLHIAQPALSQQVA) constitute a DNA-binding region (H-T-H motif).

Belongs to the LysR transcriptional regulatory family.

Its function is as follows. Transcriptional activator for the hut, put and ure operons and repressor for the gdh and gltB operons in response to nitrogen limitation. Negative regulator of its own expression. This is Nitrogen assimilation regulatory protein nac (nac) from Escherichia coli (strain K12).